The sequence spans 618 residues: Proline--tRNA ligase (618 aa).

It belongs to the class-II aminoacyl-tRNA synthetase family. ProS type 1 subfamily. As to quaternary structure, homodimer.

The protein localises to the cytoplasm. It catalyses the reaction tRNA(Pro) + L-proline + ATP = L-prolyl-tRNA(Pro) + AMP + diphosphate. In terms of biological role, catalyzes the attachment of proline to tRNA(Pro) in a two-step reaction: proline is first activated by ATP to form Pro-AMP and then transferred to the acceptor end of tRNA(Pro). As ProRS can inadvertently accommodate and process non-cognate amino acids such as alanine and cysteine, to avoid such errors it has two additional distinct editing activities against alanine. One activity is designated as 'pretransfer' editing and involves the tRNA(Pro)-independent hydrolysis of activated Ala-AMP. The other activity is designated 'posttransfer' editing and involves deacylation of mischarged Ala-tRNA(Pro). The misacylated Cys-tRNA(Pro) is not edited by ProRS. This Streptococcus pyogenes serotype M4 (strain MGAS10750) protein is Proline--tRNA ligase.